Reading from the N-terminus, the 626-residue chain is Trehalase (626 aa).

2 consecutive transmembrane segments (helical) span residues 20-40 and 45-65; these read KLFL…FIYL and SLFF…MLDS. 7 residues coordinate alpha,alpha-trehalose: R224, D232, N268, R277, Q279, R344, and E346. Catalysis depends on proton donor/acceptor residues D380 and E580. Positions 580 and 595 each coordinate alpha,alpha-trehalose.

The protein belongs to the glycosyl hydrolase 37 family. As to quaternary structure, forms homodimers. Highly expressed in flowers. Expressed at low levels in leaves and stems. Expressed in guard cells.

It is found in the cell membrane. Its subcellular location is the cytoplasm. It localises to the nucleus. It carries out the reaction alpha,alpha-trehalose + H2O = alpha-D-glucose + beta-D-glucose. Its function is as follows. Involved in the regulation of trehalose content by hydrolyzing trehalose to glucose. May play a role in the regulation of abscisic acid-induced stomatal closure in response to drought stress. This is Trehalase (TRE1) from Arabidopsis thaliana (Mouse-ear cress).